A 488-amino-acid chain; its full sequence is 3-octaprenyl-4-hydroxybenzoate carboxy-lyase (488 aa).

Mn(2+) is bound at residue asparagine 172. Residues 175-177 (IYR), 189-191 (RWL), and 194-195 (RG) each bind prenylated FMN. Residue glutamate 238 participates in Mn(2+) binding. Aspartate 287 (proton donor) is an active-site residue.

This sequence belongs to the UbiD family. Homohexamer. It depends on prenylated FMN as a cofactor. The cofactor is Mn(2+).

It is found in the cell membrane. The enzyme catalyses a 4-hydroxy-3-(all-trans-polyprenyl)benzoate + H(+) = a 2-(all-trans-polyprenyl)phenol + CO2. Its pathway is cofactor biosynthesis; ubiquinone biosynthesis. Catalyzes the decarboxylation of 3-octaprenyl-4-hydroxy benzoate to 2-octaprenylphenol, an intermediate step in ubiquinone biosynthesis. The chain is 3-octaprenyl-4-hydroxybenzoate carboxy-lyase from Legionella pneumophila subsp. pneumophila (strain Philadelphia 1 / ATCC 33152 / DSM 7513).